A 210-amino-acid chain; its full sequence is Probable nicotinate-nucleotide adenylyltransferase (210 aa).

The protein belongs to the NadD family.

It carries out the reaction nicotinate beta-D-ribonucleotide + ATP + H(+) = deamido-NAD(+) + diphosphate. It participates in cofactor biosynthesis; NAD(+) biosynthesis; deamido-NAD(+) from nicotinate D-ribonucleotide: step 1/1. Its function is as follows. Catalyzes the reversible adenylation of nicotinate mononucleotide (NaMN) to nicotinic acid adenine dinucleotide (NaAD). The sequence is that of Probable nicotinate-nucleotide adenylyltransferase from Methylococcus capsulatus (strain ATCC 33009 / NCIMB 11132 / Bath).